Consider the following 395-residue polypeptide: MANDYLFTSESVSEGHPDKVADQISDAILDAILAQDKYSRVAAETLCNTGLVVLAGEITTTANVDYIQVARETIKRIGYDNTDYGIDYRGCAVLVAYDKQSPDIAQGVDRAHDNNLDQGAGDQGLMFGYACDETPELMPLPIHLSHRLVERQANLRRDGRLPWLRPDAKSQVTIRYVDGKPHSIDTVVLSTQHSPDIDLGQLREAVIEEIIKPTLPAELIKGDIKFLVNPTGRFVIGGPQGDCGLTGRKIIVDTYGGAAPHGGGAFSGKDPSKVDRSAAYAGRYVAKNIVAAGLASRALIQVSYAIGVAQPTSVMVNTFGTGRVSDATITRLVQEHFDLRPKGIIQMLDLLRPVYEKTAAYGHFGREEPEFSWEATDKALALAEAAGTEPVAALA.

Histidine 16 contributes to the ATP binding site. Aspartate 18 is a Mg(2+) binding site. Glutamate 44 is a K(+) binding site. Positions 57 and 100 each coordinate L-methionine. The segment at 100 to 110 (QSPDIAQGVDR) is flexible loop. Residues 167–169 (DAK), 233–234 (RF), aspartate 242, 248–249 (RK), alanine 265, and lysine 269 contribute to the ATP site. Residue aspartate 242 coordinates L-methionine. L-methionine is bound at residue lysine 273.

Belongs to the AdoMet synthase family. Homotetramer; dimer of dimers. Requires Mg(2+) as cofactor. The cofactor is K(+).

It localises to the cytoplasm. The enzyme catalyses L-methionine + ATP + H2O = S-adenosyl-L-methionine + phosphate + diphosphate. It functions in the pathway amino-acid biosynthesis; S-adenosyl-L-methionine biosynthesis; S-adenosyl-L-methionine from L-methionine: step 1/1. Functionally, catalyzes the formation of S-adenosylmethionine (AdoMet) from methionine and ATP. The overall synthetic reaction is composed of two sequential steps, AdoMet formation and the subsequent tripolyphosphate hydrolysis which occurs prior to release of AdoMet from the enzyme. The polypeptide is S-adenosylmethionine synthase (Paraburkholderia phymatum (strain DSM 17167 / CIP 108236 / LMG 21445 / STM815) (Burkholderia phymatum)).